A 553-amino-acid polypeptide reads, in one-letter code: Dihydroxy-acid dehydratase (553 aa).

Asp-78 serves as a coordination point for Mg(2+). Cys-119 is a [2Fe-2S] cluster binding site. Residues Asp-120 and Lys-121 each coordinate Mg(2+). Lys-121 carries the post-translational modification N6-carboxylysine. Position 191 (Cys-191) interacts with [2Fe-2S] cluster. Residue Glu-442 coordinates Mg(2+). The active-site Proton acceptor is the Ser-468.

Belongs to the IlvD/Edd family. Homodimer. The cofactor is [2Fe-2S] cluster. Requires Mg(2+) as cofactor.

The catalysed reaction is (2R)-2,3-dihydroxy-3-methylbutanoate = 3-methyl-2-oxobutanoate + H2O. It carries out the reaction (2R,3R)-2,3-dihydroxy-3-methylpentanoate = (S)-3-methyl-2-oxopentanoate + H2O. It functions in the pathway amino-acid biosynthesis; L-isoleucine biosynthesis; L-isoleucine from 2-oxobutanoate: step 3/4. It participates in amino-acid biosynthesis; L-valine biosynthesis; L-valine from pyruvate: step 3/4. In terms of biological role, functions in the biosynthesis of branched-chain amino acids. Catalyzes the dehydration of (2R,3R)-2,3-dihydroxy-3-methylpentanoate (2,3-dihydroxy-3-methylvalerate) into 2-oxo-3-methylpentanoate (2-oxo-3-methylvalerate) and of (2R)-2,3-dihydroxy-3-methylbutanoate (2,3-dihydroxyisovalerate) into 2-oxo-3-methylbutanoate (2-oxoisovalerate), the penultimate precursor to L-isoleucine and L-valine, respectively. The chain is Dihydroxy-acid dehydratase from Carboxydothermus hydrogenoformans (strain ATCC BAA-161 / DSM 6008 / Z-2901).